A 72-amino-acid chain; its full sequence is Exodeoxyribonuclease 7 small subunit (72 aa).

It belongs to the XseB family. As to quaternary structure, heterooligomer composed of large and small subunits.

It is found in the cytoplasm. It catalyses the reaction Exonucleolytic cleavage in either 5'- to 3'- or 3'- to 5'-direction to yield nucleoside 5'-phosphates.. Its function is as follows. Bidirectionally degrades single-stranded DNA into large acid-insoluble oligonucleotides, which are then degraded further into small acid-soluble oligonucleotides. The protein is Exodeoxyribonuclease 7 small subunit of Chlamydia trachomatis serovar D (strain ATCC VR-885 / DSM 19411 / UW-3/Cx).